Reading from the N-terminus, the 698-residue chain is Sulfhydryl oxidase 2 (698 aa).

The first 21 residues, 1–21 (MAAAGAAVARSPGIGAGPALR), serve as a signal peptide directing secretion. Residues 34–178 (PRLLVLLAAA…RQTMIDFLQN (145 aa)) enclose the Thioredoxin domain. The N-linked (GlcNAc...) asparagine glycan is linked to asparagine 77. Catalysis depends on nucleophile residues cysteine 91 and cysteine 94. Cystine bridges form between cysteine 91-cysteine 94 and cysteine 122-cysteine 131. 3 N-linked (GlcNAc...) asparagine glycosylation sites follow: asparagine 178, asparagine 218, and asparagine 266. An intrachain disulfide couples cysteine 418 to cysteine 430. The ERV/ALR sulfhydryl oxidase domain occupies 421 to 530 (SRSELRGYPC…EDPRFPKLQW (110 aa)). Residues arginine 426, tryptophan 433, histidine 437, glutamate 478, histidine 482, 505–512 (WKKHNMVN), lysine 527, and tryptophan 530 contribute to the FAD site. An intrachain disulfide couples cysteine 476 to cysteine 479. Residues cysteine 536 and cysteine 539 are joined by a disulfide bond. The disordered stretch occupies residues 570-624 (TYSADQGDSSEGGTLARGEEEEKRLTPPEVSHGDRDTQSVRPPGALGPRPALPES). Residues 572 to 581 (SADQGDSSEG) show a composition bias toward polar residues. Serine 579 is modified (phosphoserine). Residues 586 to 607 (RGEEEEKRLTPPEVSHGDRDTQ) show a composition bias toward basic and acidic residues. The segment covering 610 to 622 (RPPGALGPRPALP) has biased composition (low complexity). Residues 662–682 (SLCVVLYVASSLFLMVMYFFF) traverse the membrane as a helical segment.

Belongs to the quiescin-sulfhydryl oxidase (QSOX) family. It depends on FAD as a cofactor. As to expression, expressed in pancreas, brain, placenta, kidney, heart and fetal tissues. Weakly expressed in lung, liver and skeletal muscles.

The protein localises to the membrane. It localises to the secreted. The protein resides in the cell membrane. It is found in the nucleus membrane. It carries out the reaction 2 R'C(R)SH + O2 = R'C(R)S-S(R)CR' + H2O2. Catalyzes the oxidation of sulfhydryl groups in peptide and protein thiols to disulfides with the reduction of oxygen to hydrogen peroxide. May contribute to disulfide bond formation in a variety of secreted proteins. Also seems to play a role in regulating the sensitization of neuroblastoma cells for interferon-gamma-induced apoptosis. This is Sulfhydryl oxidase 2 (QSOX2) from Homo sapiens (Human).